Here is a 505-residue protein sequence, read N- to C-terminus: 2,3-bisphosphoglycerate-independent phosphoglycerate mutase (505 aa).

Mn(2+) is bound by residues aspartate 13 and serine 63. Residue serine 63 is the Phosphoserine intermediate of the active site. Substrate contacts are provided by residues histidine 124, 153–154 (RD), arginine 183, arginine 189, 254–257 (RADR), and lysine 329. The Mn(2+) site is built by aspartate 395, histidine 399, aspartate 436, histidine 437, and histidine 455.

The protein belongs to the BPG-independent phosphoglycerate mutase family. Monomer. It depends on Mn(2+) as a cofactor.

The catalysed reaction is (2R)-2-phosphoglycerate = (2R)-3-phosphoglycerate. It participates in carbohydrate degradation; glycolysis; pyruvate from D-glyceraldehyde 3-phosphate: step 3/5. Functionally, catalyzes the interconversion of 2-phosphoglycerate and 3-phosphoglycerate. This Agrobacterium fabrum (strain C58 / ATCC 33970) (Agrobacterium tumefaciens (strain C58)) protein is 2,3-bisphosphoglycerate-independent phosphoglycerate mutase.